A 164-amino-acid polypeptide reads, in one-letter code: Succinate dehydrogenase assembly factor 2, mitochondrial (164 aa).

The N-terminal 27 residues, 1–27, are a transit peptide targeting the mitochondrion; it reads MAVVTLIPTLARVLSKHSLLSPLLSVT.

This sequence belongs to the SDHAF2 family. Interacts with SDHA within the SDH catalytic dimer.

Its subcellular location is the mitochondrion matrix. In terms of biological role, plays an essential role in the assembly of succinate dehydrogenase (SDH), an enzyme complex (also referred to as respiratory complex II) that is a component of both the tricarboxylic acid (TCA) cycle and the mitochondrial electron transport chain, and which couples the oxidation of succinate to fumarate with the reduction of ubiquinone (coenzyme Q) to ubiquinol. Required for flavinylation (covalent attachment of FAD) of the flavoprotein subunit SDHA of the SDH catalytic dimer. The chain is Succinate dehydrogenase assembly factor 2, mitochondrial from Rattus norvegicus (Rat).